The following is a 103-amino-acid chain: Large ribosomal subunit protein bL21 (103 aa).

It belongs to the bacterial ribosomal protein bL21 family. In terms of assembly, part of the 50S ribosomal subunit. Contacts protein L20.

Its function is as follows. This protein binds to 23S rRNA in the presence of protein L20. In Bordetella petrii (strain ATCC BAA-461 / DSM 12804 / CCUG 43448), this protein is Large ribosomal subunit protein bL21.